The sequence spans 67 residues: MPKLKTKSGAKKRFKVTGTGKVVYAQAGKRHGMIKRTNKQIRNLRGTTTLFEGDAANVKKYFLPNQR.

Belongs to the bacterial ribosomal protein bL35 family.

The chain is Large ribosomal subunit protein bL35 from Methylorubrum populi (strain ATCC BAA-705 / NCIMB 13946 / BJ001) (Methylobacterium populi).